A 122-amino-acid chain; its full sequence is Acidic phospholipase A2 homolog vipoxin A chain (122 aa).

Intrachain disulfides connect Cys26/Cys115, Cys28/Cys44, Cys43/Cys95, Cys49/Cys122, Cys50/Cys88, Cys57/Cys81, and Cys75/Cys86.

This sequence belongs to the phospholipase A2 family. Group II subfamily. D49 sub-subfamily. As to quaternary structure, heterodimer of A and B (AC P14420) chains; non-covalently linked. The A chain (acidic) is non-toxic, and increases the toxicity of the B chain (basic). The A chain may act as factor stabilizing the complex structure and hence retaining its toxicity by preventing non-specific binding. Upon binding to the target membranes the A chain may dissociate. Expressed by the venom gland.

It is found in the secreted. Its function is as follows. Heterodimer: postsynaptic neurotoxin. In terms of biological role, monomer: Acidic phospholipase A2 homolog that is non-toxic. The sequence is that of Acidic phospholipase A2 homolog vipoxin A chain from Vipera ammodytes meridionalis (Eastern sand viper).